The sequence spans 495 residues: Ubiquinone biosynthesis monooxygenase COQ6, mitochondrial (495 aa).

It belongs to the UbiH/COQ6 family. Component of a multi-subunit COQ enzyme complex. It depends on FAD as a cofactor.

The protein resides in the mitochondrion inner membrane. It carries out the reaction a 4-hydroxy-3-(all-trans-polyprenyl)benzoate + 2 reduced [2Fe-2S]-[ferredoxin] + O2 + 2 H(+) = a 3,4-dihydroxy-5-(all-trans-polyprenyl)benzoate + 2 oxidized [2Fe-2S]-[ferredoxin] + H2O. The enzyme catalyses a 2-methoxy-6-(all-trans-polyprenyl)phenol + 2 reduced [2Fe-2S]-[ferredoxin] + O2 + 2 H(+) = a 2-methoxy-6-(all-trans-polyprenyl)benzene-1,4-diol + 2 oxidized [2Fe-2S]-[ferredoxin] + H2O. The protein operates within cofactor biosynthesis; ubiquinone biosynthesis. Its function is as follows. FAD-dependent monooxygenase required for two non-consecutive steps during ubiquinone biosynthesis. Required for the C5-ring hydroxylation during ubiquinone biosynthesis by catalyzing the hydroxylation of 4-hydroxy-3-(all-trans-polyprenyl)benzoic acid to 3,4-dihydroxy-5-(all-trans-polyprenyl)benzoic acid. Also acts downstream of coq4, for the C1-hydroxylation during ubiquinone biosynthesis by catalyzing the hydroxylation of 2-methoxy-6-(all-trans-polyprenyl)phenol to 2-methoxy-6-(all-trans-polyprenyl)benzene-1,4-diol. The electrons required for the hydroxylation reaction are funneled indirectly to coq6 from NADPH via a ferredoxin/ferredoxin reductase system. The sequence is that of Ubiquinone biosynthesis monooxygenase COQ6, mitochondrial from Dictyostelium discoideum (Social amoeba).